Here is a 389-residue protein sequence, read N- to C-terminus: 1-deoxy-D-xylulose 5-phosphate reductoisomerase (389 aa).

NADPH-binding residues include S11, G12, S13, V14, N39, and N122. K123 contacts 1-deoxy-D-xylulose 5-phosphate. E124 contributes to the NADPH binding site. Mn(2+) is bound at residue D148. 1-deoxy-D-xylulose 5-phosphate contacts are provided by S149, E150, S174, and H197. Mn(2+) is bound at residue E150. G203 contacts NADPH. Positions 210, 215, 216, and 219 each coordinate 1-deoxy-D-xylulose 5-phosphate. Residue E219 participates in Mn(2+) binding.

It belongs to the DXR family. Requires Mg(2+) as cofactor. It depends on Mn(2+) as a cofactor.

The catalysed reaction is 2-C-methyl-D-erythritol 4-phosphate + NADP(+) = 1-deoxy-D-xylulose 5-phosphate + NADPH + H(+). The protein operates within isoprenoid biosynthesis; isopentenyl diphosphate biosynthesis via DXP pathway; isopentenyl diphosphate from 1-deoxy-D-xylulose 5-phosphate: step 1/6. In terms of biological role, catalyzes the NADPH-dependent rearrangement and reduction of 1-deoxy-D-xylulose-5-phosphate (DXP) to 2-C-methyl-D-erythritol 4-phosphate (MEP). This is 1-deoxy-D-xylulose 5-phosphate reductoisomerase from Leptospira interrogans serogroup Icterohaemorrhagiae serovar Lai (strain 56601).